The chain runs to 257 residues: Phosphatidylglycerol--prolipoprotein diacylglyceryl transferase (257 aa).

The next 7 membrane-spanning stretches (helical) occupy residues 13 to 33 (FGPIAVHWYGIFMAISIAVGG), 49 to 69 (FLLNLLMIVVIFGVIGARLMF), 88 to 108 (IYEGGLSWHGAVLGGFLAGLY), 123 to 143 (FAVVGLALGNMLVRVGNIFNH), 152 to 172 (FFFGRWPAQLVGVAIGAFLLI), 186 to 202 (YQFWSFIFYYQLLRGVF), and 223 to 243 (IGLFTMTQVATPFILILAYWM). R136 is a binding site for a 1,2-diacyl-sn-glycero-3-phospho-(1'-sn-glycerol).

This sequence belongs to the Lgt family.

It localises to the cell membrane. It catalyses the reaction L-cysteinyl-[prolipoprotein] + a 1,2-diacyl-sn-glycero-3-phospho-(1'-sn-glycerol) = an S-1,2-diacyl-sn-glyceryl-L-cysteinyl-[prolipoprotein] + sn-glycerol 1-phosphate + H(+). Its pathway is protein modification; lipoprotein biosynthesis (diacylglyceryl transfer). In terms of biological role, catalyzes the transfer of the diacylglyceryl group from phosphatidylglycerol to the sulfhydryl group of the N-terminal cysteine of a prolipoprotein, the first step in the formation of mature lipoproteins. The sequence is that of Phosphatidylglycerol--prolipoprotein diacylglyceryl transferase from Caldanaerobacter subterraneus subsp. tengcongensis (strain DSM 15242 / JCM 11007 / NBRC 100824 / MB4) (Thermoanaerobacter tengcongensis).